The primary structure comprises 215 residues: Recombination protein RecR (215 aa).

Residues 74 to 89 (CQRCGHLSADPICDIC) form a C4-type zinc finger. The Toprim domain occupies 97–191 (GVICVVADSR…RVTRIAYGLP (95 aa)).

The protein belongs to the RecR family.

Functionally, may play a role in DNA repair. It seems to be involved in an RecBC-independent recombinational process of DNA repair. It may act with RecF and RecO. This chain is Recombination protein RecR, found in Synechococcus sp. (strain RCC307).